Consider the following 114-residue polypeptide: Hydrogenase maturation factor HypA (114 aa).

Histidine 2 is a Ni(2+) binding site. Residues cysteine 74, cysteine 77, cysteine 90, and cysteine 93 each coordinate Zn(2+).

This sequence belongs to the HypA/HybF family.

Its function is as follows. Involved in the maturation of [NiFe] hydrogenases. Required for nickel insertion into the metal center of the hydrogenase. This is Hydrogenase maturation factor HypA from Campylobacter jejuni subsp. jejuni serotype O:2 (strain ATCC 700819 / NCTC 11168).